The chain runs to 134 residues: Profilin-3 (134 aa).

Cys13 and Cys118 are joined by a disulfide. Positions 84–100 (AVIRGKKGSGGITIKKT) match the Involved in PIP2 interaction motif. At Thr114 the chain carries Phosphothreonine.

This sequence belongs to the profilin family. In terms of assembly, occurs in many kinds of cells as a complex with monomeric actin in a 1:1 ratio. Post-translationally, phosphorylated by MAP kinases.

It localises to the cytoplasm. It is found in the cytoskeleton. Functionally, binds to actin and affects the structure of the cytoskeleton. At high concentrations, profilin prevents the polymerization of actin, whereas it enhances it at low concentrations. By binding to PIP2, it inhibits the formation of IP3 and DG. The chain is Profilin-3 (PRO3) from Olea europaea (Common olive).